The following is a 184-amino-acid chain: Photosystem I assembly protein Ycf4 (184 aa).

Helical transmembrane passes span 22–42 and 57–77; these read FFWA…GTSS and IIFF…LFIS.

Belongs to the Ycf4 family.

It localises to the plastid. The protein resides in the chloroplast thylakoid membrane. In terms of biological role, seems to be required for the assembly of the photosystem I complex. In Aethionema grandiflorum (Persian stone-cress), this protein is Photosystem I assembly protein Ycf4.